Reading from the N-terminus, the 156-residue chain is ATP synthase subunit b (156 aa).

A helical transmembrane segment spans residues 7 to 29; that stretch reads LIGQLIAFALFTWFCVKFVWPPI.

It belongs to the ATPase B chain family. F-type ATPases have 2 components, F(1) - the catalytic core - and F(0) - the membrane proton channel. F(1) has five subunits: alpha(3), beta(3), gamma(1), delta(1), epsilon(1). F(0) has three main subunits: a(1), b(2) and c(10-14). The alpha and beta chains form an alternating ring which encloses part of the gamma chain. F(1) is attached to F(0) by a central stalk formed by the gamma and epsilon chains, while a peripheral stalk is formed by the delta and b chains.

The protein resides in the cell inner membrane. Its function is as follows. F(1)F(0) ATP synthase produces ATP from ADP in the presence of a proton or sodium gradient. F-type ATPases consist of two structural domains, F(1) containing the extramembraneous catalytic core and F(0) containing the membrane proton channel, linked together by a central stalk and a peripheral stalk. During catalysis, ATP synthesis in the catalytic domain of F(1) is coupled via a rotary mechanism of the central stalk subunits to proton translocation. Functionally, component of the F(0) channel, it forms part of the peripheral stalk, linking F(1) to F(0). This chain is ATP synthase subunit b, found in Actinobacillus succinogenes (strain ATCC 55618 / DSM 22257 / CCUG 43843 / 130Z).